A 348-amino-acid chain; its full sequence is Large ribosomal subunit protein uL3m (348 aa).

The transit peptide at 1–40 (MPGWRLLAQAGARVLGCGARGLGADPGLERRKNILFFVRN) directs the protein to the mitochondrion.

This sequence belongs to the universal ribosomal protein uL3 family. Component of the mitochondrial ribosome large subunit (39S) which comprises a 16S rRNA and about 50 distinct proteins.

The protein localises to the mitochondrion. This Mus musculus (Mouse) protein is Large ribosomal subunit protein uL3m (Mrpl3).